A 308-amino-acid polypeptide reads, in one-letter code: Ribosomal RNA large subunit methyltransferase F (308 aa).

The protein belongs to the methyltransferase superfamily. METTL16/RlmF family.

The protein resides in the cytoplasm. The catalysed reaction is adenosine(1618) in 23S rRNA + S-adenosyl-L-methionine = N(6)-methyladenosine(1618) in 23S rRNA + S-adenosyl-L-homocysteine + H(+). Its function is as follows. Specifically methylates the adenine in position 1618 of 23S rRNA. The polypeptide is Ribosomal RNA large subunit methyltransferase F (Salmonella arizonae (strain ATCC BAA-731 / CDC346-86 / RSK2980)).